The following is a 568-amino-acid chain: NADPH oxidase 3 (568 aa).

Over 1–12 the chain is Cytoplasmic; sequence MPTCWILNESVS. Residues 13-33 form a helical membrane-spanning segment; sequence FVVALLWLAINIYLFIDTFCW. Over 34–49 the chain is Extracellular; sequence YAEEESFFYTRVILGS. A helical transmembrane segment spans residues 50–70; it reads ALAWARASAVCLNFNCMLILL. Residues 55–284 form the Ferric oxidoreductase domain; that stretch reads RASAVCLNFN…VVLYACEIII (230 aa). Residues 71 to 103 lie on the Cytoplasmic side of the membrane; sequence PVSRNFVSLVRGTSVCCRGPWRRQLDKNLKFHK. A helical membrane pass occupies residues 104–124; the sequence is LVAYGIAVNSVIHIVAHLFNL. Residues 125–167 lie on the Extracellular side of the membrane; that stretch reads ERYHLGQAKDAEGLLAALSKLGNAPNESYLNPVRTLYTGTTTQ. The chain crosses the membrane as a helical span at residues 168–188; it reads LLMTVSGITGLVISLALILIM. Topologically, residues 189-201 are cytoplasmic; the sequence is TSSTEFIRQSSYE. Residues 202 to 222 traverse the membrane as a helical segment; the sequence is LFWYTHHIFIFLFISLAIHGG. Residues 223–395 are Extracellular-facing; the sequence is GRIIRGQTPE…DGPFGGSLAD (173 aa). N-linked (GlcNAc...) asparagine glycosylation is present at asparagine 238. The region spanning 285–395 is the FAD-binding FR-type domain; the sequence is RFWRSHQEVV…DGPFGGSLAD (111 aa). The chain crosses the membrane as a helical span at residues 396–416; that stretch reads VFHYPVSVCIATGIGVTPFAS. Residues 417–568 lie on the Cytoplasmic side of the membrane; sequence LLKSVWYKCC…VHFYYNKENF (152 aa).

In terms of assembly, forms a heterodimer with CYBA/p22phox which is essential for its activity and cell membrane localization. Requires heme as cofactor. Post-translationally, N-glycosylated in a CYBA/p22phox-dependent manner. Expressed in the inner ear by the spiral glanglia and the organ of Corti.

It localises to the cell membrane. The enzyme catalyses NADPH + 2 O2 = 2 superoxide + NADP(+) + H(+). With respect to regulation, activated by the ototoxic drug cisplatin. Activated by NOXO1. Cooperatively activated by NCF1 and NCF2 or NOXA1 in a phorbol 12-myristate 13-acetate (PMA)-dependent manner. Inhibited by diphenyleneiodonium chloride. NADPH oxidase that catalyzes the generation of superoxide from molecular oxygen utilizing NADPH as an electron donor, upon formation of a complex with CYBA/p22phox. Plays a role in the biogenesis of otoconia/otolith, which are crystalline structures of the inner ear involved in the perception of gravity. The polypeptide is NADPH oxidase 3 (Nox3) (Rattus norvegicus (Rat)).